We begin with the raw amino-acid sequence, 259 residues long: Indole-3-glycerol phosphate synthase (259 aa).

The protein belongs to the TrpC family.

It carries out the reaction 1-(2-carboxyphenylamino)-1-deoxy-D-ribulose 5-phosphate + H(+) = (1S,2R)-1-C-(indol-3-yl)glycerol 3-phosphate + CO2 + H2O. Its pathway is amino-acid biosynthesis; L-tryptophan biosynthesis; L-tryptophan from chorismate: step 4/5. The protein is Indole-3-glycerol phosphate synthase of Rhodopirellula baltica (strain DSM 10527 / NCIMB 13988 / SH1).